The following is a 104-amino-acid chain: L-rhamnose mutarotase (104 aa).

Position 18 (Y18) interacts with substrate. H22 functions as the Proton donor in the catalytic mechanism. Substrate is bound by residues Y41 and 76 to 77 (WW).

It belongs to the rhamnose mutarotase family. As to quaternary structure, homodimer.

Its subcellular location is the cytoplasm. The enzyme catalyses alpha-L-rhamnose = beta-L-rhamnose. It participates in carbohydrate metabolism; L-rhamnose metabolism. Its function is as follows. Involved in the anomeric conversion of L-rhamnose. The polypeptide is L-rhamnose mutarotase (Clostridium beijerinckii (strain ATCC 51743 / NCIMB 8052) (Clostridium acetobutylicum)).